We begin with the raw amino-acid sequence, 60 residues long: Mastoparan-VT1 (60 aa).

A signal peptide spans 1–25; that stretch reads MKNTILILFTAFIALLGFFGMSAEA. Positions 26 to 45 are excised as a propeptide; that stretch reads LADLKADPLAGPNPDADPEA. AXPX repeat units lie at residues 31 to 34, 35 to 38, and 41 to 44; these read ADPL, AGPN, and ADPE. Leucine 59 is subject to Leucine amide.

It belongs to the MCD family. Mastoparan subfamily. As to expression, expressed by the venom gland.

The protein localises to the secreted. In terms of biological role, antimicrobial peptide with activities against Gram-negative and Gram-positive bacteria and the fungi C.albicans and C.parapsilosis. Exhibits little hemolytic activity against washed human erythrocytes. Also acts as a mast cell degranulating peptide. Its mast cell degranulation activity may be related to the activation of G-protein coupled receptors in mast cells as well as interaction with other proteins located in cell endosomal membranes in the mast cells. Functionally, antimicrobial peptide with activities against Gram-negative and Gram-positive bacteria and the fungi C.albicans and C.parapsilosis. Exhibits little hemolytic activity against washed human erythrocytes. Also acts as a mast cell degranulating peptide. The chain is Mastoparan-VT1 from Vespa tropica (Greater banded hornet).